The primary structure comprises 166 residues: Protein-export protein SecB (166 aa).

It belongs to the SecB family. As to quaternary structure, homotetramer, a dimer of dimers. One homotetramer interacts with 1 SecA dimer.

Its subcellular location is the cytoplasm. One of the proteins required for the normal export of preproteins out of the cell cytoplasm. It is a molecular chaperone that binds to a subset of precursor proteins, maintaining them in a translocation-competent state. It also specifically binds to its receptor SecA. In Roseobacter denitrificans (strain ATCC 33942 / OCh 114) (Erythrobacter sp. (strain OCh 114)), this protein is Protein-export protein SecB.